The following is a 240-amino-acid chain: Guanine nucleotide exchange factor sopE2 (240 aa).

The segment at 78-240 (LTSKTVKDFM…IANKYLQNAS (163 aa)) is GEF catalytic domain.

Belongs to the GEF (guanine exchange factor) SopE family.

Its subcellular location is the secreted. Functionally, activator for CDC42 by directly engaging this Rho GTPase and acting as potent guanine nucleotide exchange factor (GEF). This activation results in actin cytoskeleton rearrangements and stimulates membrane ruffling, promoting bacterial entry into non-phagocytic cells. Chaperone InvB is required for secretion, translocation and stabilization of intracellular levels of sopE2. This is Guanine nucleotide exchange factor sopE2 (sopE2) from Salmonella paratyphi A (strain ATCC 9150 / SARB42).